A 225-amino-acid chain; its full sequence is Ureidoacrylate amidohydrolase RutB (225 aa).

Residue Asp-22 is the Proton acceptor of the active site. The active site involves Lys-131. Cys-164 acts as the Nucleophile in catalysis.

This sequence belongs to the isochorismatase family. RutB subfamily.

The enzyme catalyses (Z)-3-ureidoacrylate + H2O + H(+) = (Z)-3-aminoacrylate + NH4(+) + CO2. The catalysed reaction is (Z)-3-ureidoacrylate + H2O = (Z)-3-aminoacrylate + carbamate + H(+). It catalyses the reaction (Z)-2-methylureidoacrylate + H2O + H(+) = (Z)-2-methylaminoacrylate + NH4(+) + CO2. Its function is as follows. Hydrolyzes ureidoacrylate to form aminoacrylate and carbamate. The carbamate hydrolyzes spontaneously, thereby releasing one of the nitrogen atoms of the pyrimidine ring as ammonia and one of its carbon atoms as CO2. In Caulobacter vibrioides (strain ATCC 19089 / CIP 103742 / CB 15) (Caulobacter crescentus), this protein is Ureidoacrylate amidohydrolase RutB.